Reading from the N-terminus, the 274-residue chain is tRNA-cytidine(32) 2-sulfurtransferase (274 aa).

The PP-loop motif motif lies at 40 to 45 (SGGKDS). The [4Fe-4S] cluster site is built by Cys115, Cys118, and Cys206.

This sequence belongs to the TtcA family. As to quaternary structure, homodimer. Mg(2+) serves as cofactor. It depends on [4Fe-4S] cluster as a cofactor.

The protein localises to the cytoplasm. The enzyme catalyses cytidine(32) in tRNA + S-sulfanyl-L-cysteinyl-[cysteine desulfurase] + AH2 + ATP = 2-thiocytidine(32) in tRNA + L-cysteinyl-[cysteine desulfurase] + A + AMP + diphosphate + H(+). Its pathway is tRNA modification. Functionally, catalyzes the ATP-dependent 2-thiolation of cytidine in position 32 of tRNA, to form 2-thiocytidine (s(2)C32). The sulfur atoms are provided by the cysteine/cysteine desulfurase (IscS) system. The sequence is that of tRNA-cytidine(32) 2-sulfurtransferase from Pseudomonas entomophila (strain L48).